The primary structure comprises 145 residues: Protein SprT-like (145 aa).

The SprT-like domain maps to 5 to 140; that stretch reads DYVREVSLAD…ACGRCHGRLI (136 aa). Position 64 (H64) interacts with Zn(2+). E65 is a catalytic residue. Residue H68 participates in Zn(2+) binding.

The protein belongs to the SprT family. Requires Zn(2+) as cofactor.

The protein resides in the cytoplasm. In Streptococcus equi subsp. zooepidemicus (strain MGCS10565), this protein is Protein SprT-like.